We begin with the raw amino-acid sequence, 333 residues long: Zinc-type alcohol dehydrogenase-like protein SACOL2177 (333 aa).

This sequence belongs to the zinc-containing alcohol dehydrogenase family. Quinone oxidoreductase subfamily.

The sequence is that of Zinc-type alcohol dehydrogenase-like protein SACOL2177 from Staphylococcus aureus (strain COL).